A 259-amino-acid chain; its full sequence is Phosphatidylglycerol--prolipoprotein diacylglyceryl transferase (259 aa).

A run of 4 helical transmembrane segments spans residues 9–29, 55–75, 92–112, and 117–137; these read IIFS…VIGI, FITY…VLLY, EGGM…YLFC, and INFL…LFLG. R138 is a binding site for a 1,2-diacyl-sn-glycero-3-phospho-(1'-sn-glycerol). Transmembrane regions (helical) follow at residues 172 to 192, 201 to 221, and 228 to 248; these read QLYE…YTTF, GLNS…IEIF, and IGFI…MLLL.

This sequence belongs to the Lgt family.

The protein localises to the cell inner membrane. It catalyses the reaction L-cysteinyl-[prolipoprotein] + a 1,2-diacyl-sn-glycero-3-phospho-(1'-sn-glycerol) = an S-1,2-diacyl-sn-glyceryl-L-cysteinyl-[prolipoprotein] + sn-glycerol 1-phosphate + H(+). The protein operates within protein modification; lipoprotein biosynthesis (diacylglyceryl transfer). Catalyzes the transfer of the diacylglyceryl group from phosphatidylglycerol to the sulfhydryl group of the N-terminal cysteine of a prolipoprotein, the first step in the formation of mature lipoproteins. This chain is Phosphatidylglycerol--prolipoprotein diacylglyceryl transferase, found in Rickettsia africae (strain ESF-5).